Consider the following 205-residue polypeptide: FMN reductase (NADH) RutF (205 aa).

Positions 171–205 are disordered; it reads PRAPRSGSAPAEPARAARALGARPAEGPALALRSA.

This sequence belongs to the non-flavoprotein flavin reductase family. RutF subfamily.

The catalysed reaction is FMNH2 + NAD(+) = FMN + NADH + 2 H(+). In terms of biological role, catalyzes the reduction of FMN to FMNH2 which is used to reduce pyrimidine by RutA via the Rut pathway. The protein is FMN reductase (NADH) RutF of Methylorubrum extorquens (strain DSM 6343 / CIP 106787 / DM4) (Methylobacterium extorquens).